The following is a 354-amino-acid chain: Probable L-ascorbate-6-phosphate lactonase UlaG (354 aa).

The protein belongs to the UlaG family. The cofactor is a divalent metal cation.

The protein resides in the cytoplasm. It catalyses the reaction L-ascorbate 6-phosphate + H2O = 3-dehydro-L-gulonate 6-phosphate. It functions in the pathway cofactor degradation; L-ascorbate degradation; D-xylulose 5-phosphate from L-ascorbate: step 1/4. Probably catalyzes the hydrolysis of L-ascorbate-6-P into 3-keto-L-gulonate-6-P. Is essential for L-ascorbate utilization under anaerobic conditions. The sequence is that of Probable L-ascorbate-6-phosphate lactonase UlaG from Escherichia coli O139:H28 (strain E24377A / ETEC).